Here is a 364-residue protein sequence, read N- to C-terminus: PqqA peptide cyclase (364 aa).

A Radical SAM core domain is found at 6 to 222 (VGAPAGMLIE…HARTRYAGGP (217 aa)). Positions 20, 24, and 27 each coordinate [4Fe-4S] cluster.

It belongs to the radical SAM superfamily. PqqE family. In terms of assembly, interacts with PqqD. The interaction is necessary for activity of PqqE. [4Fe-4S] cluster serves as cofactor.

It catalyses the reaction [PQQ precursor protein] + S-adenosyl-L-methionine = E-Y cross-linked-[PQQ precursor protein] + 5'-deoxyadenosine + L-methionine + H(+). The protein operates within cofactor biosynthesis; pyrroloquinoline quinone biosynthesis. Functionally, catalyzes the cross-linking of a glutamate residue and a tyrosine residue in the PqqA protein as part of the biosynthesis of pyrroloquinoline quinone (PQQ). The protein is PqqA peptide cyclase of Streptomyces rochei (Streptomyces parvullus).